Here is an 889-residue protein sequence, read N- to C-terminus: DNA mismatch repair protein MutS (889 aa).

Residue 641–648 coordinates ATP; it reads GPNMAGKS.

Belongs to the DNA mismatch repair MutS family.

In terms of biological role, this protein is involved in the repair of mismatches in DNA. It is possible that it carries out the mismatch recognition step. This protein has a weak ATPase activity. The protein is DNA mismatch repair protein MutS of Orientia tsutsugamushi (strain Ikeda) (Rickettsia tsutsugamushi).